Here is a 225-residue protein sequence, read N- to C-terminus: Thymidylate kinase (225 aa).

Residue 15–22 (GGEGSGKS) participates in ATP binding.

Belongs to the thymidylate kinase family.

It catalyses the reaction dTMP + ATP = dTDP + ADP. Phosphorylation of dTMP to form dTDP in both de novo and salvage pathways of dTTP synthesis. This chain is Thymidylate kinase, found in Protochlamydia amoebophila (strain UWE25).